We begin with the raw amino-acid sequence, 262 residues long: Encapsulin nanocompartment protein Rv1762c (262 aa).

It belongs to the UPF0145 family.

It is found in the encapsulin nanocompartment. In terms of biological role, cargo protein of a type 1 encapsulin nanocompartment possibly involved in protection against oxidative stress. The sequence is that of Encapsulin nanocompartment protein Rv1762c from Mycobacterium tuberculosis (strain ATCC 25618 / H37Rv).